The chain runs to 310 residues: Dermonecrotic toxin LiSicTox-alphaII2 (310 aa).

The signal sequence occupies residues 1-18 (MLLRIALILGCWSILSEG). A propeptide spanning residues 19 to 26 (AENDIAER) is cleaved from the precursor. H38 is a catalytic residue. Positions 58 and 60 each coordinate Mg(2+). H74 functions as the Nucleophile in the catalytic mechanism. 2 disulfides stabilise this stretch: C78-C84 and C80-C224. N-linked (GlcNAc...) asparagine glycosylation is present at N99. D118 contacts Mg(2+).

Belongs to the arthropod phospholipase D family. Class II subfamily. The cofactor is Mg(2+). Expressed by the venom gland.

The protein localises to the secreted. The enzyme catalyses an N-(acyl)-sphingosylphosphocholine = an N-(acyl)-sphingosyl-1,3-cyclic phosphate + choline. It catalyses the reaction an N-(acyl)-sphingosylphosphoethanolamine = an N-(acyl)-sphingosyl-1,3-cyclic phosphate + ethanolamine. The catalysed reaction is a 1-acyl-sn-glycero-3-phosphocholine = a 1-acyl-sn-glycero-2,3-cyclic phosphate + choline. It carries out the reaction a 1-acyl-sn-glycero-3-phosphoethanolamine = a 1-acyl-sn-glycero-2,3-cyclic phosphate + ethanolamine. In terms of biological role, dermonecrotic toxins cleave the phosphodiester linkage between the phosphate and headgroup of certain phospholipids (sphingolipid and lysolipid substrates), forming an alcohol (often choline) and a cyclic phosphate. This toxin acts on sphingomyelin (SM). It may also act on ceramide phosphoethanolamine (CPE), lysophosphatidylcholine (LPC) and lysophosphatidylethanolamine (LPE), but not on lysophosphatidylserine (LPS), and lysophosphatidylglycerol (LPG). It acts by transphosphatidylation, releasing exclusively cyclic phosphate products as second products. Induces dermonecrosis, hemolysis, increased vascular permeability, edema, inflammatory response, and platelet aggregation. The sequence is that of Dermonecrotic toxin LiSicTox-alphaII2 from Loxosceles intermedia (Brown spider).